The primary structure comprises 286 residues: Acyl-CoA-binding domain-containing protein 6 (286 aa).

The region spanning 32–117 (LQCQFEQAAK…VKKLDPDWSP (86 aa)) is the ACB domain. An acyl-CoA contacts are provided by residues 59–63 (YARYK), Lys85, and Tyr104. ANK repeat units lie at residues 182 to 211 (EGRS…HINM) and 215 to 244 (EGQT…DPSL).

It is found in the cytoplasm. Its subcellular location is the nucleus. Functionally, binds long-chain acyl-coenzyme A molecules with a strong preference for unsaturated C18:1-CoA. Does not bind fatty acids. Plays a role in protein N-myristoylation. This chain is Acyl-CoA-binding domain-containing protein 6 (acbd6), found in Xenopus laevis (African clawed frog).